A 475-amino-acid chain; its full sequence is Pentatricopeptide repeat-containing protein At1g29710, mitochondrial (475 aa).

Residues 1–37 (MVRLWCGKLRLWKPYLALATQSRNSWFCSGGGAPSHH) constitute a mitochondrion transit peptide. PPR repeat units lie at residues 83–117 (AQNV…GYAM), 118–148 (DLIR…IIAL), 153–183 (DVGA…MPEW), 184–218 (NSGT…GNKP), 219–254 (NGEI…GIVP), and 255–285 (SMEH…MPME). The tract at residues 350–380 (YFYSTFRPVDSSHPQMNIIYETLMSLRSQLK) is type E(+) motif. The type DYW motif stretch occupies residues 381-475 (EMGYVPDTRY…NGVCRCNNLW (95 aa)).

Belongs to the PPR family. PCMP-H subfamily.

It localises to the mitochondrion. This chain is Pentatricopeptide repeat-containing protein At1g29710, mitochondrial (PCMP-H67), found in Arabidopsis thaliana (Mouse-ear cress).